Consider the following 246-residue polypeptide: Probable phosphatase Ssed_2939 (246 aa).

The Zn(2+) site is built by H8, H10, H16, H41, E74, H102, H132, D193, and H195.

The protein belongs to the PHP family. The cofactor is Zn(2+).

This Shewanella sediminis (strain HAW-EB3) protein is Probable phosphatase Ssed_2939.